The sequence spans 413 residues: Lipoyl synthase, mitochondrial (413 aa).

The N-terminal 33 residues, 1–33 (MAAATNRFRALYSSSRVATPQAGSASYLSYRGY), are a transit peptide targeting the mitochondrion. Positions 133, 138, 144, 164, 168, 171, and 379 each coordinate [4Fe-4S] cluster. One can recognise a Radical SAM core domain in the interval 147–368 (GGDKAAATAT…RQRALDMGFL (222 aa)).

This sequence belongs to the radical SAM superfamily. Lipoyl synthase family. Requires [4Fe-4S] cluster as cofactor.

The protein resides in the mitochondrion. It catalyses the reaction [[Fe-S] cluster scaffold protein carrying a second [4Fe-4S](2+) cluster] + N(6)-octanoyl-L-lysyl-[protein] + 2 oxidized [2Fe-2S]-[ferredoxin] + 2 S-adenosyl-L-methionine + 4 H(+) = [[Fe-S] cluster scaffold protein] + N(6)-[(R)-dihydrolipoyl]-L-lysyl-[protein] + 4 Fe(3+) + 2 hydrogen sulfide + 2 5'-deoxyadenosine + 2 L-methionine + 2 reduced [2Fe-2S]-[ferredoxin]. It functions in the pathway protein modification; protein lipoylation via endogenous pathway; protein N(6)-(lipoyl)lysine from octanoyl-[acyl-carrier-protein]: step 2/2. Catalyzes the radical-mediated insertion of two sulfur atoms into the C-6 and C-8 positions of the octanoyl moiety bound to the lipoyl domains of lipoate-dependent enzymes, thereby converting the octanoylated domains into lipoylated derivatives. The polypeptide is Lipoyl synthase, mitochondrial (Emericella nidulans (strain FGSC A4 / ATCC 38163 / CBS 112.46 / NRRL 194 / M139) (Aspergillus nidulans)).